Reading from the N-terminus, the 776-residue chain is DExH-box ATP-dependent RNA helicase DExH18, mitochondrial (776 aa).

A mitochondrion-targeting transit peptide spans 1 to 84 (MARGVAGVLR…RSFSSTVDNN (84 aa)). The interval 80 to 101 (TVDNNGENDDIEESVGSESDDY) is disordered. The span at 85–101 (GENDDIEESVGSESDDY) shows a compositional bias: acidic residues. One can recognise a Helicase ATP-binding domain in the interval 268 to 426 (FARAMKRKIV…RFKPLVVEAK (159 aa)). ATP is bound at residue 281-288 (GPTNSGKT). The DEIH box; degenerate signature appears at 361–364 (DEIQ). The 169-residue stretch at 427–595 (TLLGELKNVK…LFAAQVPDMA (169 aa)) folds into the Helicase C-terminal domain.

It belongs to the DExH box helicase family. In terms of assembly, homodimer; in free form. Component of the mitochondrial degradosome (mtEXO) complex which is a heteropentamer containing 2 copies of SUPV3L1 and 3 copies of PNPT1. It depends on Mg(2+) as a cofactor. Mn(2+) serves as cofactor.

It is found in the nucleus. Its subcellular location is the mitochondrion matrix. The protein localises to the mitochondrion nucleoid. It carries out the reaction ATP + H2O = ADP + phosphate + H(+). In terms of biological role, major helicase player in mitochondrial RNA metabolism. Component of the mitochondrial degradosome (mtEXO) complex, that degrades 3' overhang double-stranded RNA with a 3'-to-5' directionality in an ATP-dependent manner. ATPase and ATP-dependent multisubstrate helicase, able to unwind double-stranded (ds) DNA and RNA, and RNA/DNA heteroduplexes in the 5'-to-3' direction. Plays a role in the RNA surveillance system in mitochondria; regulates the stability of mature mRNAs, the removal of aberrantly formed mRNAs and the rapid degradation of non coding processing intermediates. In Arabidopsis thaliana (Mouse-ear cress), this protein is DExH-box ATP-dependent RNA helicase DExH18, mitochondrial.